The primary structure comprises 248 residues: 14-3-3 protein sigma (248 aa).

A phosphoserine mark is found at serine 5, serine 74, and serine 248.

It belongs to the 14-3-3 family. In terms of assembly, homodimer. Interacts with KRT17 and SAMSN1. Found in a complex with XPO7, EIF4A1, ARHGAP1, VPS26A, VPS29 and VPS35. Interacts with GAB2. Interacts with SRPK2. Interacts with COPS6. Interacts with COP1; this interaction leads to proteasomal degradation. Interacts with the 'Thr-369' phosphorylated form of DAPK2. Interacts with PI4KB. Interacts with SLITRK1. Interacts with LRRK2; this interaction is dependent on LRRK2 phosphorylation. Interacts with PKP3 (via N-terminus); the interaction maintains the cytoplasmic pool of PKP3, facilitates PKP3 exchange at desmosomes and restricts PKP3 localization to existing desmosome cell junctions. Interacts with LCP2. In terms of processing, ubiquitinated. Ubiquitination by RFFL induces proteasomal degradation and indirectly regulates p53/TP53 activation. In terms of tissue distribution, expressed in dorsal skin (at protein level). Expressed in the basal layer of skin epithelium and in outer root sheath of hair follicle.

It localises to the cytoplasm. It is found in the nucleus. The protein localises to the secreted. In terms of biological role, adapter protein implicated in the regulation of a large spectrum of both general and specialized signaling pathways. Binds to a large number of partners, usually by recognition of a phosphoserine or phosphothreonine motif. Binding generally results in the modulation of the activity of the binding partner. Promotes cytosolic retention of GBP1 GTPase by binding to phosphorylated GBP1, thereby inhibiting the innate immune response. Also acts as a TP53/p53-regulated inhibitor of G2/M progression. When bound to KRT17, regulates protein synthesis and epithelial cell growth by stimulating Akt/mTOR pathway. Acts to maintain desmosome cell junction adhesion in epithelial cells via interacting with and sequestering PKP3 to the cytoplasm, thereby restricting its translocation to existing desmosome structures and therefore maintaining desmosome protein homeostasis. Also acts to facilitate PKP3 exchange at desmosome plaques, thereby maintaining keratinocyte intercellular adhesion. May also regulate MDM2 autoubiquitination and degradation and thereby activate p53/TP53. The chain is 14-3-3 protein sigma (Sfn) from Mus musculus (Mouse).